Reading from the N-terminus, the 564-residue chain is Dihydroxy-acid dehydratase 2 (564 aa).

C59 is a [2Fe-2S] cluster binding site. D91 serves as a coordination point for Mg(2+). Residue C132 participates in [2Fe-2S] cluster binding. Mg(2+) contacts are provided by D133 and K134. The residue at position 134 (K134) is an N6-carboxylysine. C204 contacts [2Fe-2S] cluster. Position 454 (E454) interacts with Mg(2+). S480 (proton acceptor) is an active-site residue.

It belongs to the IlvD/Edd family. As to quaternary structure, homodimer. [2Fe-2S] cluster is required as a cofactor. Requires Mg(2+) as cofactor.

The catalysed reaction is (2R)-2,3-dihydroxy-3-methylbutanoate = 3-methyl-2-oxobutanoate + H2O. It carries out the reaction (2R,3R)-2,3-dihydroxy-3-methylpentanoate = (S)-3-methyl-2-oxopentanoate + H2O. It functions in the pathway amino-acid biosynthesis; L-isoleucine biosynthesis; L-isoleucine from 2-oxobutanoate: step 3/4. It participates in amino-acid biosynthesis; L-valine biosynthesis; L-valine from pyruvate: step 3/4. Functions in the biosynthesis of branched-chain amino acids. Catalyzes the dehydration of (2R,3R)-2,3-dihydroxy-3-methylpentanoate (2,3-dihydroxy-3-methylvalerate) into 2-oxo-3-methylpentanoate (2-oxo-3-methylvalerate) and of (2R)-2,3-dihydroxy-3-methylbutanoate (2,3-dihydroxyisovalerate) into 2-oxo-3-methylbutanoate (2-oxoisovalerate), the penultimate precursor to L-isoleucine and L-valine, respectively. The protein is Dihydroxy-acid dehydratase 2 of Staphylococcus saprophyticus subsp. saprophyticus (strain ATCC 15305 / DSM 20229 / NCIMB 8711 / NCTC 7292 / S-41).